We begin with the raw amino-acid sequence, 665 residues long: Cinnamate reductase (665 aa).

Q109 contacts FMN. Y182 serves as the catalytic Proton donor. FMN contacts are provided by residues R230, R319, and 341 to 342 (GR). Residues C365, C368, C372, and C384 each contribute to the [4Fe-4S] cluster site. 5 residues coordinate FAD: A415, E434, N442, K452, and A479.

In the N-terminal section; belongs to the NADH:flavin oxidoreductase/NADH oxidase family. FMN is required as a cofactor. FAD serves as cofactor. Requires [4Fe-4S] cluster as cofactor.

It catalyses the reaction 3-phenylpropanoate + NAD(+) = (E)-cinnamate + NADH + H(+). The protein operates within amino-acid degradation; L-phenylalanine degradation. Involved in the fermentation of L-phenylalanine via a Stickland reaction. Catalyzes the reduction of (E)-cinnamate to yield 3-phenylpropionate. This chain is Cinnamate reductase, found in Clostridium sporogenes (strain ATCC 7955 / DSM 767 / NBRC 16411 / NCIMB 8053 / NCTC 8594 / PA 3679).